A 175-amino-acid polypeptide reads, in one-letter code: Translation initiation factor IF-3 (175 aa).

This sequence belongs to the IF-3 family. As to quaternary structure, monomer.

It is found in the cytoplasm. Functionally, IF-3 binds to the 30S ribosomal subunit and shifts the equilibrium between 70S ribosomes and their 50S and 30S subunits in favor of the free subunits, thus enhancing the availability of 30S subunits on which protein synthesis initiation begins. The sequence is that of Translation initiation factor IF-3 from Aquifex aeolicus (strain VF5).